The primary structure comprises 236 residues: Small ribosomal subunit protein uS2c (236 aa).

The protein belongs to the universal ribosomal protein uS2 family.

Its subcellular location is the plastid. It is found in the chloroplast. In Triticum aestivum (Wheat), this protein is Small ribosomal subunit protein uS2c (rps2).